A 391-amino-acid polypeptide reads, in one-letter code: 3-ketoacyl-CoA thiolase (391 aa).

Catalysis depends on C95, which acts as the Acyl-thioester intermediate. Residues H347 and C377 each act as proton acceptor in the active site.

Belongs to the thiolase-like superfamily. Thiolase family. Heterotetramer of two alpha chains (FadB) and two beta chains (FadA).

The protein localises to the cytoplasm. The enzyme catalyses an acyl-CoA + acetyl-CoA = a 3-oxoacyl-CoA + CoA. The protein operates within lipid metabolism; fatty acid beta-oxidation. Functionally, catalyzes the final step of fatty acid oxidation in which acetyl-CoA is released and the CoA ester of a fatty acid two carbons shorter is formed. The polypeptide is 3-ketoacyl-CoA thiolase (Alcanivorax borkumensis (strain ATCC 700651 / DSM 11573 / NCIMB 13689 / SK2)).